The sequence spans 223 residues: Ubiquitin carboxyl-terminal hydrolase isozyme L1 (223 aa).

Residue methionine 1 is modified to N-acetylmethionine. The UCH catalytic domain occupies 2 to 221; the sequence is QLKPMEINPE…VRFSAVALCK (220 aa). The segment at 5–10 is interaction with ubiquitin; that stretch reads PMEINP. Cysteine 90 serves as the catalytic Nucleophile. Phosphoserine is present on serine 125. The Proton donor role is filled by histidine 161. Residues 211-216 are interaction with ubiquitin; that stretch reads EVRFSA. The S-farnesyl cysteine moiety is linked to residue cysteine 220. Positions 221 to 223 are cleaved as a propeptide — removed in mature form; it reads KAA.

It belongs to the peptidase C12 family. In terms of assembly, monomer. Homodimer. Interacts with COPS5 and SNCA. Post-translationally, O-glycosylated.

Its subcellular location is the cytoplasm. The protein resides in the endoplasmic reticulum membrane. It catalyses the reaction Thiol-dependent hydrolysis of ester, thioester, amide, peptide and isopeptide bonds formed by the C-terminal Gly of ubiquitin (a 76-residue protein attached to proteins as an intracellular targeting signal).. In terms of biological role, ubiquitin-protein hydrolase involved both in the processing of ubiquitin precursors and of ubiquitinated proteins. This enzyme is a thiol protease that recognizes and hydrolyzes a peptide bond at the C-terminal glycine of ubiquitin. Also binds to free monoubiquitin and may prevent its degradation in lysosomes. The homodimer may have ATP-independent ubiquitin ligase activity. The sequence is that of Ubiquitin carboxyl-terminal hydrolase isozyme L1 (UCHL1) from Sus scrofa (Pig).